Consider the following 204-residue polypeptide: FMN-dependent NADH:quinone oxidoreductase 1 (204 aa).

Residues S10 and 15-17 (SLS) each bind FMN.

Belongs to the azoreductase type 1 family. In terms of assembly, homodimer. FMN is required as a cofactor.

The enzyme catalyses 2 a quinone + NADH + H(+) = 2 a 1,4-benzosemiquinone + NAD(+). It carries out the reaction N,N-dimethyl-1,4-phenylenediamine + anthranilate + 2 NAD(+) = 2-(4-dimethylaminophenyl)diazenylbenzoate + 2 NADH + 2 H(+). Functionally, quinone reductase that provides resistance to thiol-specific stress caused by electrophilic quinones. In terms of biological role, also exhibits azoreductase activity. Catalyzes the reductive cleavage of the azo bond in aromatic azo compounds to the corresponding amines. The protein is FMN-dependent NADH:quinone oxidoreductase 1 of Rhizobium etli (strain ATCC 51251 / DSM 11541 / JCM 21823 / NBRC 15573 / CFN 42).